Here is an 894-residue protein sequence, read N- to C-terminus: Translation initiation factor IF-2 (894 aa).

Positions 52 to 301 (DRGAAPNKLT…RRPSTLTQGF (250 aa)) are disordered. A compositionally biased stretch (polar residues) spans 68–82 (STLNIPSTGGKSKSV). Positions 107 to 154 (EQARREAEELAQHQVQRDAEEKAKRAAEDKAKREAAEQAKRVAAESDK) are enriched in basic and acidic residues. The segment covering 155 to 168 (LTNQQTNTMTKSPQ) has biased composition (polar residues). Basic and acidic residues-rich tracts occupy residues 171–214 (EKAR…ERGG) and 237–254 (HARE…GDRR). Residues 255 to 269 (SRTRGGKATKQKKTS) show a composition bias toward basic residues. The segment covering 270 to 283 (RLSESKADREEARA) has biased composition (basic and acidic residues). The tr-type G domain occupies 393-562 (SRAPVVTIMG…LLQAEVLELK (170 aa)). Positions 402–409 (GHVDHGKT) are G1. A GTP-binding site is contributed by 402–409 (GHVDHGKT). Positions 427–431 (GITQH) are G2. The G3 stretch occupies residues 448 to 451 (DTPG). GTP-binding positions include 448–452 (DTPGH) and 502–505 (NKID). The segment at 502 to 505 (NKID) is G4. Residues 538–540 (SAK) are G5.

Belongs to the TRAFAC class translation factor GTPase superfamily. Classic translation factor GTPase family. IF-2 subfamily.

It is found in the cytoplasm. Its function is as follows. One of the essential components for the initiation of protein synthesis. Protects formylmethionyl-tRNA from spontaneous hydrolysis and promotes its binding to the 30S ribosomal subunits. Also involved in the hydrolysis of GTP during the formation of the 70S ribosomal complex. The sequence is that of Translation initiation factor IF-2 from Sodalis glossinidius (strain morsitans).